The sequence spans 912 residues: Ubiquitin carboxyl-terminal hydrolase 20 (912 aa).

The UBP-type zinc-finger motif lies at 6-111 (DLCPHLDSIG…GPAPKFSEQD (106 aa)). The Zn(2+) site is built by Cys8, His10, Cys30, Cys33, Cys43, Cys48, Cys53, His60, His64, His70, Cys83, and Cys86. The disordered stretch occupies residues 101–120 (PGPAPKFSEQDSPPPSHPLK). Phosphoserine is present on residues Ser112, Ser132, and Ser134. Positions 145-683 (TGMKNLGNSC…EAYVLFYRKS (539 aa)) constitute a USP domain. Cys154 (nucleophile) is an active-site residue. Disordered stretches follow at residues 258–308 (LTEA…GSQA) and 322–415 (ISEK…ASPV). Phosphothreonine is present on Thr259. A compositionally biased stretch (basic and acidic residues) spans 260 to 280 (EARDSDSSDTDEKREGDRSPS). Ser306 bears the Phosphoserine mark. Residues 322-333 (ISEKERMKDRKF) are compositionally biased toward basic and acidic residues. Ser369 is modified (phosphoserine). Thr378 is subject to Phosphothreonine. Phosphoserine is present on residues Ser408 and Ser413. His641 serves as the catalytic Proton acceptor. DUSP domains lie at 685 to 778 (EEAV…LYVC) and 787 to 890 (ALAK…RQSV).

This sequence belongs to the peptidase C19 family. USP20/USP33 subfamily. As to quaternary structure, interacts with VHL, leading to its ubiquitination and subsequent degradation. Interacts with CCP110. Interacts with DIO2. Interacts with HIF1A. Interacts with ADRB2. Interacts with USP18. Post-translationally, ubiquitinated via a VHL-dependent pathway for proteasomal degradation.

It localises to the cytoplasm. It is found in the endoplasmic reticulum. Its subcellular location is the perinuclear region. The protein resides in the cytoskeleton. The protein localises to the microtubule organizing center. It localises to the centrosome. It carries out the reaction Thiol-dependent hydrolysis of ester, thioester, amide, peptide and isopeptide bonds formed by the C-terminal Gly of ubiquitin (a 76-residue protein attached to proteins as an intracellular targeting signal).. Its function is as follows. Deubiquitinating enzyme that plays a role in many cellular processes including autophagy, cellular antiviral response or membrane protein biogenesis. Attenuates TLR4-mediated NF-kappa-B signaling by cooperating with beta-arrestin-2/ARRB2 and inhibiting TRAF6 autoubiquitination. Promotes cellular antiviral responses by deconjugating 'Lys-33' and 'Lys-48'-linked ubiquitination of STING1 leading to its stabilization. Plays an essential role in autophagy induction by regulating the ULK1 stability through deubiquitination of ULK1. Acts as a positive regulator for NF-kappa-B activation by TNF-alpha through deubiquitinating 'Lys-48'-linked polyubiquitination of SQSTM1, leading to its increased stability. Acts as a regulator of G-protein coupled receptor (GPCR) signaling by mediating the deubiquitination beta-2 adrenergic receptor (ADRB2). Plays a central role in ADRB2 recycling and resensitization after prolonged agonist stimulation by constitutively binding ADRB2, mediating deubiquitination of ADRB2 and inhibiting lysosomal trafficking of ADRB2. Upon dissociation, it is probably transferred to the translocated beta-arrestins, possibly leading to beta-arrestins deubiquitination and disengagement from ADRB2. This suggests the existence of a dynamic exchange between the ADRB2 and beta-arrestins. Deubiquitinates DIO2, thereby regulating thyroid hormone regulation. Deubiquitinates HIF1A, leading to stabilize HIF1A and enhance HIF1A-mediated activity. Deubiquitinates MCL1, a pivotal member of the anti-apoptotic Bcl-2 protein family to regulate its stability. Within the endoplasmic reticulum, participates with USP33 in the rescue of post-translationally targeted membrane proteins that are inappropriately ubiquitinated by the cytosolic protein quality control in the cytosol. This chain is Ubiquitin carboxyl-terminal hydrolase 20 (USP20), found in Bos taurus (Bovine).